The chain runs to 594 residues: Parathyroid hormone/parathyroid hormone-related peptide receptor (594 aa).

The N-terminal stretch at 1–28 is a signal peptide; the sequence is MGTARIAPGLALLLCCPVLSSAYALVDA. At 29 to 188 the chain is on the extracellular side; the sequence is DDVMTKEEQI…TREREVFDRL (160 aa). Cystine bridges form between cysteine 48–cysteine 117, cysteine 108–cysteine 149, and cysteine 132–cysteine 171. Residues 66–102 form a disordered region; it reads DKGWTSASTSGKPRKDKASGKLYPESEEDKEAPTDSR. Residues asparagine 152, asparagine 162, asparagine 167, and asparagine 177 are each glycosylated (N-linked (GlcNAc...) asparagine). The chain crosses the membrane as a helical span at residues 189–209; the sequence is GMIYTVGYSMSLASLTVAVLI. The Cytoplasmic portion of the chain corresponds to 210–223; the sequence is LAYFRRLHCTRNYI. A helical membrane pass occupies residues 224 to 244; sequence HMHLFLSFMLRAVSIFVKDAV. At 245–295 the chain is on the extracellular side; that stretch reads LYSGATLDEAERLTEEELRAIAQAPPPPATAAAGYAGCRVAVTFFLYFLAT. A helical membrane pass occupies residues 296 to 316; that stretch reads NYYWILVEGLYLHSLIFMAFF. The Cytoplasmic portion of the chain corresponds to 317 to 319; sequence SEK. A helical membrane pass occupies residues 320 to 340; it reads KYLWGFTVFGWGLPAVFVAVW. Residues 341-361 lie on the Extracellular side of the membrane; that stretch reads VSVRATLANTGCWDLSSGNKK. A helical membrane pass occupies residues 362 to 382; the sequence is WIIQVPILASIVLHFILFINI. Residues 383-405 are Cytoplasmic-facing; the sequence is VRVLATKLRETNAGRCDTRQQYR. A helical transmembrane segment spans residues 406 to 426; it reads KLLKSTLVLMPLFGVHYIVFM. At 427-440 the chain is on the extracellular side; that stretch reads ATPYTEVSGTLWQV. Residues 441–461 traverse the membrane as a helical segment; it reads QMHYEMLFNSFQGFFVAIIYC. Over 462–594 the chain is Cytoplasmic; sequence FCNGEVQAEI…LLQEEWETVM (133 aa). The Important for interaction with G proteins motif lies at 475–478; the sequence is WSRW. The tract at residues 525-594 is disordered; that stretch reads PTATTNGHPQ…LLQEEWETVM (70 aa). The span at 543 to 558 shows a compositional bias: low complexity; that stretch reads TPALETLETTPPATAA. Threonine 552 carries the post-translational modification Phosphothreonine.

Belongs to the G-protein coupled receptor 2 family. In terms of assembly, homodimer in the absence of bound ligand. Peptide hormone binding leads to dissociation of the homodimer. N-glycosylated.

It is found in the cell membrane. G-protein-coupled receptor for parathyroid hormone (PTH) and for parathyroid hormone-related peptide (PTHLH). Ligand binding causes a conformation change that triggers signaling via guanine nucleotide-binding proteins (G proteins) and modulates the activity of downstream effectors, such as adenylate cyclase (cAMP). PTH1R is coupled to G(s) G alpha proteins and mediates activation of adenylate cyclase activity. PTHLH dissociates from PTH1R more rapidly than PTH; as consequence, the cAMP response induced by PTHLH decays faster than the response induced by PTH. In Pongo abelii (Sumatran orangutan), this protein is Parathyroid hormone/parathyroid hormone-related peptide receptor (PTH1R).